The chain runs to 434 residues: Cytochrome P450 144 (434 aa).

Substrate is bound by residues Asp124 and His128. 4 residues coordinate heme: Arg132, Arg326, His383, and Cys385.

It belongs to the cytochrome P450 family. Monomer. Requires heme as cofactor.

This Mycobacterium tuberculosis (strain CDC 1551 / Oshkosh) protein is Cytochrome P450 144 (cyp144).